A 401-amino-acid polypeptide reads, in one-letter code: (1R,4R,5S)-(-)-guaia-6,10(14)-diene synthase (401 aa).

The segment at 1–21 is disordered; sequence MVKFDSGSESEMTNGDDLHIN. The Mg(2+) site is built by Asp-134 and Glu-139. Positions 134–138 match the DDXXD motif motif; it reads DDQFD. Arg-242 is a binding site for substrate. Asn-288 and Ser-292 together coordinate Mg(2+). Lys-295 is a binding site for substrate. Mg(2+) is bound at residue Asp-296. 375 to 376 is a substrate binding site; that stretch reads RY.

The protein belongs to the terpene synthase family. It depends on Mg(2+) as a cofactor.

The enzyme catalyses (2E,6E)-farnesyl diphosphate = (1R,4R,5S)-(-)-guaia-6,10(14)-diene + diphosphate. It functions in the pathway secondary metabolite biosynthesis; terpenoid biosynthesis. Its function is as follows. Catalyzes the conversion of (2E,6E)-farnesyl diphosphate (FPP) to yield the bicyclic sesquiterpene guaia-6,10(14)-diene via a 1,10-cyclization, which requires the abstraction of the pyrophosphate from FPP to yield the (E,E)-germacradienyl cation. The only accepted substrate is farnesyl diphosphate (FPP). This chain is (1R,4R,5S)-(-)-guaia-6,10(14)-diene synthase, found in Fusarium proliferatum (strain ET1) (Orchid endophyte fungus).